The following is a 406-amino-acid chain: Argininosuccinate synthase (406 aa).

Residues 12–20 (AYSGGLDTS) and alanine 39 contribute to the ATP site. L-citrulline-binding residues include tyrosine 90 and serine 95. An ATP-binding site is contributed by glycine 120. Residues threonine 122, asparagine 126, and aspartate 127 each contribute to the L-aspartate site. Position 126 (asparagine 126) interacts with L-citrulline. Residues arginine 130, serine 179, serine 188, glutamate 264, and tyrosine 276 each coordinate L-citrulline.

This sequence belongs to the argininosuccinate synthase family. Type 1 subfamily. In terms of assembly, homotetramer.

It is found in the cytoplasm. It catalyses the reaction L-citrulline + L-aspartate + ATP = 2-(N(omega)-L-arginino)succinate + AMP + diphosphate + H(+). It functions in the pathway amino-acid biosynthesis; L-arginine biosynthesis; L-arginine from L-ornithine and carbamoyl phosphate: step 2/3. This chain is Argininosuccinate synthase, found in Citrifermentans bemidjiense (strain ATCC BAA-1014 / DSM 16622 / JCM 12645 / Bem) (Geobacter bemidjiensis).